Consider the following 640-residue polypeptide: 1-deoxy-D-xylulose-5-phosphate synthase (640 aa).

Thiamine diphosphate-binding positions include His-78 and 119–121; that span reads GHS. Mg(2+) is bound at residue Asp-151. Residues 152–153, Asn-180, Tyr-289, and Glu-371 contribute to the thiamine diphosphate site; that span reads GA. A Mg(2+)-binding site is contributed by Asn-180.

Belongs to the transketolase family. DXPS subfamily. In terms of assembly, homodimer. Mg(2+) is required as a cofactor. It depends on thiamine diphosphate as a cofactor.

It catalyses the reaction D-glyceraldehyde 3-phosphate + pyruvate + H(+) = 1-deoxy-D-xylulose 5-phosphate + CO2. It functions in the pathway metabolic intermediate biosynthesis; 1-deoxy-D-xylulose 5-phosphate biosynthesis; 1-deoxy-D-xylulose 5-phosphate from D-glyceraldehyde 3-phosphate and pyruvate: step 1/1. Catalyzes the acyloin condensation reaction between C atoms 2 and 3 of pyruvate and glyceraldehyde 3-phosphate to yield 1-deoxy-D-xylulose-5-phosphate (DXP). The chain is 1-deoxy-D-xylulose-5-phosphate synthase from Bartonella henselae (strain ATCC 49882 / DSM 28221 / CCUG 30454 / Houston 1) (Rochalimaea henselae).